Reading from the N-terminus, the 291-residue chain is Polyamine aminopropyltransferase (291 aa).

Residues 5 to 245 enclose the PABS domain; that stretch reads PGPIVLMEPL…YAVNFVLGSL (241 aa). Gln-36 serves as a coordination point for S-methyl-5'-thioadenosine. 2 residues coordinate spermidine: His-67 and Glu-91. S-methyl-5'-thioadenosine-binding positions include Asp-111 and 143–144; that span reads DG. The active-site Proton acceptor is Asp-164.

Belongs to the spermidine/spermine synthase family. As to quaternary structure, homodimer or homotetramer.

The protein localises to the cytoplasm. The catalysed reaction is norspermidine + S-adenosyl 3-(methylsulfanyl)propylamine = norspermine + S-methyl-5'-thioadenosine + H(+). The enzyme catalyses S-adenosyl 3-(methylsulfanyl)propylamine + spermidine = thermospermine + S-methyl-5'-thioadenosine + H(+). Its function is as follows. Involved in the biosynthesis of polyamines which are thought to support the growth of thermophilic microorganisms under high-temperature conditions. It seems that long-chain and branched-chain of polyamines effectively stabilize DNA and RNA, respectively. Catalyzes the irreversible transfer of a propylamine group from the amino donor S-adenosylmethioninamine (decarboxy-AdoMet) to norspermidine and 1,3-diaminopropane to yield norspermine, and to spermidine to yield thermospermine. It can also synthesize thermospermine from putrescine (1,4-diaminobutane) and caldopentamine from norspermine with a very low activity. The biosynthesis of caldohexamine and caldoheptamine from caldopentamine has been also observed. In Pyrobaculum aerophilum (strain ATCC 51768 / DSM 7523 / JCM 9630 / CIP 104966 / NBRC 100827 / IM2), this protein is Polyamine aminopropyltransferase.